Here is a 284-residue protein sequence, read N- to C-terminus: 2-dehydro-3-deoxyphosphooctonate aldolase (284 aa).

Belongs to the KdsA family.

The protein localises to the cytoplasm. The catalysed reaction is D-arabinose 5-phosphate + phosphoenolpyruvate + H2O = 3-deoxy-alpha-D-manno-2-octulosonate-8-phosphate + phosphate. The protein operates within carbohydrate biosynthesis; 3-deoxy-D-manno-octulosonate biosynthesis; 3-deoxy-D-manno-octulosonate from D-ribulose 5-phosphate: step 2/3. It functions in the pathway bacterial outer membrane biogenesis; lipopolysaccharide biosynthesis. The polypeptide is 2-dehydro-3-deoxyphosphooctonate aldolase (Aliivibrio fischeri (strain ATCC 700601 / ES114) (Vibrio fischeri)).